The sequence spans 208 residues: LexA repressor (208 aa).

The H-T-H motif DNA-binding region spans 28 to 48 (RAEIARELGFRSANAAEEHLK). Catalysis depends on for autocatalytic cleavage activity residues S125 and K162.

It belongs to the peptidase S24 family. Homodimer.

The enzyme catalyses Hydrolysis of Ala-|-Gly bond in repressor LexA.. Its function is as follows. Represses a number of genes involved in the response to DNA damage (SOS response), including recA and lexA. In the presence of single-stranded DNA, RecA interacts with LexA causing an autocatalytic cleavage which disrupts the DNA-binding part of LexA, leading to derepression of the SOS regulon and eventually DNA repair. This Aliivibrio fischeri (strain MJ11) (Vibrio fischeri) protein is LexA repressor.